We begin with the raw amino-acid sequence, 80 residues long: U-scoloptoxin(15)-Er1a (80 aa).

Positions 1 to 22 are cleaved as a signal peptide; that stretch reads MQNKGVVLTLFLVVSMAIVISS.

The protein belongs to the scoloptoxin-15 family. Post-translationally, contains 2 disulfide bonds. In terms of tissue distribution, expressed by the venom gland.

It localises to the secreted. The protein is U-scoloptoxin(15)-Er1a of Ethmostigmus rubripes (Giant centipede).